The primary structure comprises 325 residues: MATH domain and coiled-coil domain-containing protein At3g58340 (325 aa).

The 126-residue stretch at 6-131 folds into the MATH domain; it reads DKKFCWEIKN…NGQVMIVAEV (126 aa). Residues 266 to 315 adopt a coiled-coil conformation; that stretch reads KVDWLEKKLDHVKEKKEKEQSGLIILQGIEQQLHELMHKCEKKKSEVLSV.

The sequence is that of MATH domain and coiled-coil domain-containing protein At3g58340 from Arabidopsis thaliana (Mouse-ear cress).